A 195-amino-acid chain; its full sequence is Adenylate kinase (195 aa).

ATP is bound at residue 10-15 (GAGKGT). The segment at 30–59 (STGDMLRAAVAAGTPVGLKAKAVMDAGGLV) is NMP. AMP is bound by residues threonine 31, arginine 36, 57 to 59 (GLV), 85 to 88 (GFPR), and glutamine 92. The segment at 126 to 143 (NRAAEAQAKGEAVRKDDD) is LID. ATP is bound at residue arginine 127. Arginine 150 contributes to the AMP binding site. Alanine 178 contributes to the ATP binding site.

This sequence belongs to the adenylate kinase family. In terms of assembly, monomer.

Its subcellular location is the cytoplasm. The enzyme catalyses AMP + ATP = 2 ADP. It functions in the pathway purine metabolism; AMP biosynthesis via salvage pathway; AMP from ADP: step 1/1. In terms of biological role, catalyzes the reversible transfer of the terminal phosphate group between ATP and AMP. Plays an important role in cellular energy homeostasis and in adenine nucleotide metabolism. The polypeptide is Adenylate kinase (Xanthobacter autotrophicus (strain ATCC BAA-1158 / Py2)).